The chain runs to 132 residues: Inactive D-aminoacyl-tRNA deacylase (132 aa).

The protein belongs to the DTD family.

Functionally, a non-functional D-aminoacyl-tRNA deacylase. The chain is Inactive D-aminoacyl-tRNA deacylase from Bacillus subtilis (strain 168).